An 81-amino-acid chain; its full sequence is Small ribosomal subunit protein bS16 (81 aa).

Belongs to the bacterial ribosomal protein bS16 family.

This Nautilia profundicola (strain ATCC BAA-1463 / DSM 18972 / AmH) protein is Small ribosomal subunit protein bS16.